The primary structure comprises 270 residues: Phosphonates import ATP-binding protein PhnC 1 (270 aa).

Positions Leu2–Ala245 constitute an ABC transporter domain. Gly34–Ser41 provides a ligand contact to ATP.

Belongs to the ABC transporter superfamily. Phosphonates importer (TC 3.A.1.9.1) family. As to quaternary structure, the complex is composed of two ATP-binding proteins (PhnC), two transmembrane proteins (PhnE) and a solute-binding protein (PhnD).

Its subcellular location is the cell inner membrane. The enzyme catalyses phosphonate(out) + ATP + H2O = phosphonate(in) + ADP + phosphate + H(+). In terms of biological role, part of the ABC transporter complex PhnCDE involved in phosphonates import. Responsible for energy coupling to the transport system. The sequence is that of Phosphonates import ATP-binding protein PhnC 1 from Rhodopseudomonas palustris (strain ATCC BAA-98 / CGA009).